We begin with the raw amino-acid sequence, 1154 residues long: Kinesin-like protein KIN-7E, chloroplastic (1154 aa).

Composition is skewed to low complexity over residues 1–14 (MSSS…SISP) and 29–109 (VAAA…PPVA). Residues 1 to 21 (MSSSSRPGRASISPFRSRRTS) constitute a chloroplast transit peptide. The segment at 1–109 (MSSSSRPGRA…RAAGRAPPVA (109 aa)) is disordered. The 319-residue stretch at 119-437 (NIMVTVRFRP…LKFAHRSKHI (319 aa)) folds into the Kinesin motor domain. 199–206 (GVTSSGKT) serves as a coordination point for ATP. Residues 441-523 (ASQNKIIDEK…AALMGRIQRL (83 aa)) adopt a coiled-coil conformation. Residues 620–674 (LSTSVDSESTASGSPSFSRSSQQKHPLLDLKDGRRKSMTRKGDDPALTDSFPGRT) are disordered. Residues 628–640 (STASGSPSFSRSS) are compositionally biased toward low complexity. Coiled-coil stretches lie at residues 734–761 (DSQI…LEQR) and 801–845 (ADNR…DNVA). The interval 838 to 885 (AKNEDNVASMQSSEPSSTSSNPRDLANEVASHSKMPSRTTEDHTESPL) is disordered. The segment covering 846–857 (SMQSSEPSSTSS) has biased composition (low complexity). A coiled-coil region spans residues 894–967 (AEIENLKLDK…DLAAAKDQTR (74 aa)).

Belongs to the TRAFAC class myosin-kinesin ATPase superfamily. Kinesin family. KIN-7 subfamily.

Its subcellular location is the plastid. The protein resides in the chloroplast. This is Kinesin-like protein KIN-7E, chloroplastic from Oryza sativa subsp. japonica (Rice).